The following is a 970-amino-acid chain: Isoleucine--tRNA ligase (970 aa).

Residues 65–75 (PYANGHLHIGH) carry the 'HIGH' region motif. Residue Glu608 coordinates L-isoleucyl-5'-AMP. The 'KMSKS' region motif lies at 649-653 (KMSKS). Lys652 provides a ligand contact to ATP. Positions 943, 946, 962, and 965 each coordinate Zn(2+).

This sequence belongs to the class-I aminoacyl-tRNA synthetase family. IleS type 1 subfamily. Monomer. Zn(2+) is required as a cofactor.

It localises to the cytoplasm. It carries out the reaction tRNA(Ile) + L-isoleucine + ATP = L-isoleucyl-tRNA(Ile) + AMP + diphosphate. Functionally, catalyzes the attachment of isoleucine to tRNA(Ile). As IleRS can inadvertently accommodate and process structurally similar amino acids such as valine, to avoid such errors it has two additional distinct tRNA(Ile)-dependent editing activities. One activity is designated as 'pretransfer' editing and involves the hydrolysis of activated Val-AMP. The other activity is designated 'posttransfer' editing and involves deacylation of mischarged Val-tRNA(Ile). The chain is Isoleucine--tRNA ligase from Ruegeria pomeroyi (strain ATCC 700808 / DSM 15171 / DSS-3) (Silicibacter pomeroyi).